A 155-amino-acid polypeptide reads, in one-letter code: dCTP deaminase (155 aa).

DCTP contacts are provided by residues 79-84 (RSSLAR), aspartate 95, glutamine 124, and tyrosine 138.

This sequence belongs to the dCTP deaminase family. As to quaternary structure, homotrimer.

The enzyme catalyses dCTP + H2O + H(+) = dUTP + NH4(+). It functions in the pathway pyrimidine metabolism; dUMP biosynthesis; dUMP from dCTP (dUTP route): step 1/2. In terms of biological role, catalyzes the deamination of dCTP to dUTP. This Thermococcus kodakarensis (strain ATCC BAA-918 / JCM 12380 / KOD1) (Pyrococcus kodakaraensis (strain KOD1)) protein is dCTP deaminase.